A 170-amino-acid polypeptide reads, in one-letter code: 2S seed storage protein 2 (170 aa).

Residues 1–21 form the signal peptide; it reads MANKLFLVCATFALCFLLTNA. Propeptides lie at residues 22–37 and 73–88; these read SIYRTVVEFDEDDASN and GPSLDDEFDLEDDIEN.

It belongs to the 2S seed storage albumins family. In terms of assembly, the mature protein consists of a small and a large chain linked by disulfide bonds.

Its function is as follows. This is a 2S seed storage protein. This chain is 2S seed storage protein 2 (AT2S2), found in Arabidopsis thaliana (Mouse-ear cress).